The sequence spans 365 residues: Cobalt-precorrin-5B C(1)-methyltransferase (365 aa).

It belongs to the CbiD family.

The enzyme catalyses Co-precorrin-5B + S-adenosyl-L-methionine = Co-precorrin-6A + S-adenosyl-L-homocysteine. Its pathway is cofactor biosynthesis; adenosylcobalamin biosynthesis; cob(II)yrinate a,c-diamide from sirohydrochlorin (anaerobic route): step 6/10. Catalyzes the methylation of C-1 in cobalt-precorrin-5B to form cobalt-precorrin-6A. This Clostridium perfringens (strain 13 / Type A) protein is Cobalt-precorrin-5B C(1)-methyltransferase.